The primary structure comprises 267 residues: Small ribosomal subunit protein uS3 (267 aa).

Residues isoleucine 38–lysine 106 enclose the KH type-2 domain. Positions threonine 215–glycine 267 are disordered. The span at glycine 222–serine 233 shows a compositional bias: basic and acidic residues. Residues serine 238 to alanine 256 are compositionally biased toward low complexity.

It belongs to the universal ribosomal protein uS3 family. In terms of assembly, part of the 30S ribosomal subunit. Forms a tight complex with proteins S10 and S14.

Its function is as follows. Binds the lower part of the 30S subunit head. Binds mRNA in the 70S ribosome, positioning it for translation. The protein is Small ribosomal subunit protein uS3 of Nocardia farcinica (strain IFM 10152).